Consider the following 544-residue polypeptide: Aspartokinase (544 aa).

The ACT domain occupies 463–535 (LVGKQMVNFI…SAIGDSSAVD (73 aa)).

Belongs to the aspartokinase family.

The catalysed reaction is L-aspartate + ATP = 4-phospho-L-aspartate + ADP. It functions in the pathway amino-acid biosynthesis; L-methionine biosynthesis via de novo pathway; L-homoserine from L-aspartate: step 1/3. Its pathway is amino-acid biosynthesis; L-threonine biosynthesis; L-threonine from L-aspartate: step 1/5. In terms of biological role, phosphorylates aspartate, the first step in the biosynthesis of amino acids that derive from aspartate (the aspartate family of amino acids), including methioinine and threonine, the latter of which is a precursor to isoleucine. This is Aspartokinase from Candida albicans (strain SC5314 / ATCC MYA-2876) (Yeast).